A 577-amino-acid chain; its full sequence is Isocitrate dehydrogenase kinase/phosphatase (577 aa).

ATP contacts are provided by residues 318–324 (APGVRGM) and K339. D374 is an active-site residue.

Belongs to the AceK family.

It is found in the cytoplasm. It carries out the reaction L-seryl-[isocitrate dehydrogenase] + ATP = O-phospho-L-seryl-[isocitrate dehydrogenase] + ADP + H(+). Bifunctional enzyme which can phosphorylate or dephosphorylate isocitrate dehydrogenase (IDH) on a specific serine residue. This is a regulatory mechanism which enables bacteria to bypass the Krebs cycle via the glyoxylate shunt in response to the source of carbon. When bacteria are grown on glucose, IDH is fully active and unphosphorylated, but when grown on acetate or ethanol, the activity of IDH declines drastically concomitant with its phosphorylation. This chain is Isocitrate dehydrogenase kinase/phosphatase, found in Pseudomonas aeruginosa (strain UCBPP-PA14).